The primary structure comprises 364 residues: Coproporphyrin III ferrochelatase (364 aa).

2 residues coordinate Fe-coproporphyrin III: Arg-29 and Tyr-118. Fe(2+)-binding residues include His-169 and Glu-250.

This sequence belongs to the ferrochelatase family.

It is found in the cytoplasm. The enzyme catalyses Fe-coproporphyrin III + 2 H(+) = coproporphyrin III + Fe(2+). Its pathway is porphyrin-containing compound metabolism; protoheme biosynthesis. In terms of biological role, involved in coproporphyrin-dependent heme b biosynthesis. Catalyzes the insertion of ferrous iron into coproporphyrin III to form Fe-coproporphyrin III. The chain is Coproporphyrin III ferrochelatase from Streptococcus pneumoniae (strain Taiwan19F-14).